Consider the following 361-residue polypeptide: 5-formaminoimidazole-4-carboxamide-1-(beta)-D-ribofuranosyl 5'-monophosphate synthetase (361 aa).

5-amino-1-(5-phospho-beta-D-ribosyl)imidazole-4-carboxamide-binding residues include His-27 and Ser-94. In terms of domain architecture, ATP-grasp spans 116–348 (RAILRWEAER…MGQRIAREIK (233 aa)). Residues 146–208 (PDDI…ANYC) and Glu-230 contribute to the ATP site. Asn-258 serves as a coordination point for 5-amino-1-(5-phospho-beta-D-ribosyl)imidazole-4-carboxamide. Positions 297 and 310 each coordinate Mg(2+).

Belongs to the phosphohexose mutase family. Mg(2+) is required as a cofactor. The cofactor is Mn(2+).

The enzyme catalyses 5-amino-1-(5-phospho-beta-D-ribosyl)imidazole-4-carboxamide + formate + ATP = 5-formamido-1-(5-phospho-D-ribosyl)imidazole-4-carboxamide + ADP + phosphate. Its pathway is purine metabolism; IMP biosynthesis via de novo pathway; 5-formamido-1-(5-phospho-D-ribosyl)imidazole-4-carboxamide from 5-amino-1-(5-phospho-D-ribosyl)imidazole-4-carboxamide (formate route): step 1/1. Functionally, catalyzes the ATP- and formate-dependent formylation of 5-aminoimidazole-4-carboxamide-1-beta-d-ribofuranosyl 5'-monophosphate (AICAR) to 5-formaminoimidazole-4-carboxamide-1-beta-d-ribofuranosyl 5'-monophosphate (FAICAR) in the absence of folates. The polypeptide is 5-formaminoimidazole-4-carboxamide-1-(beta)-D-ribofuranosyl 5'-monophosphate synthetase (Methanococcus maripaludis (strain C7 / ATCC BAA-1331)).